Here is a 691-residue protein sequence, read N- to C-terminus: Competence protein ComA (691 aa).

6 helical membrane passes run 183 to 203 (HLVSISGLHVTMVAVLFAWLA), 220 to 240 (WVLAAGCAGALFYALLAGFSV), 280 to 300 (LAVLGVGTWLSFGLVAALIWA), 322 to 342 (VLSLVLLGYLFASLPLVSPLV), 347 to 367 (IPWFSWVLTPLALLGSVVPFA), and 396 to 416 (VAAAPLPLLVLAVCAALLLLL).

The protein to B.subtilis ComEC, H.influenzae REC2, and E.coli YcaI.

The protein resides in the cell inner membrane. Essential for natural transformation. Could be a transporter involved in DNA uptake. This Neisseria gonorrhoeae protein is Competence protein ComA (comA).